A 404-amino-acid chain; its full sequence is D-galactonate dehydratase family member Ent638_1932 (404 aa).

Residues N37 and H122 each coordinate substrate. Y159 acts as the Proton donor/acceptor in catalysis. Position 212 (D212) interacts with Mg(2+). Catalysis depends on H214, which acts as the Proton donor/acceptor. Residues E238 and E264 each contribute to the Mg(2+) site. The substrate site is built by E264, R285, H314, D318, and E341.

Belongs to the mandelate racemase/muconate lactonizing enzyme family. GalD subfamily. It depends on Mg(2+) as a cofactor.

The catalysed reaction is D-mannonate = 2-dehydro-3-deoxy-D-gluconate + H2O. Its function is as follows. Has low D-mannonate dehydratase activity (in vitro), suggesting that this is not a physiological substrate and that it has no significant role in D-mannonate degradation in vivo. Has no detectable activity with a panel of 70 other acid sugars (in vitro). This chain is D-galactonate dehydratase family member Ent638_1932, found in Enterobacter sp. (strain 638).